The chain runs to 666 residues: Zinc finger protein 710 (666 aa).

Residues Lys-110 and Lys-113 each participate in a glycyl lysine isopeptide (Lys-Gly) (interchain with G-Cter in SUMO2) cross-link. The tract at residues 113-141 (KAEEEEEQEVYEVSVPGDDKDPGPAEAPA) is disordered. 3 consecutive C2H2-type zinc fingers follow at residues 297–319 (WQCR…ILGH), 325–347 (HSCP…LLTH), and 353–375 (HKCQ…MLLH). Lys-379 is covalently cross-linked (Glycyl lysine isopeptide (Lys-Gly) (interchain with G-Cter in SUMO2)). 8 consecutive C2H2-type zinc fingers follow at residues 381–403 (YSCH…EVKH), 409–431 (HVCV…LASH), 437–459 (YQCL…MLKH), 465–487 (FVCT…SLTH), 493–515 (FKCE…MLIH), 521–543 (YQCH…MIVH), 549–571 (FKCK…MHLH), and 577–600 (FKCP…KVKH).

It belongs to the krueppel C2H2-type zinc-finger protein family.

It localises to the nucleus. Functionally, may be involved in transcriptional regulation. This chain is Zinc finger protein 710 (Znf710), found in Mus musculus (Mouse).